We begin with the raw amino-acid sequence, 275 residues long: Large ribosomal subunit protein uL2c (275 aa).

The interval 224–263 (VMNPVDHPHGGGEGRAPIGRKRPLTPWGRPALGKKSRKNH) is disordered.

Belongs to the universal ribosomal protein uL2 family. As to quaternary structure, part of the 50S ribosomal subunit.

It is found in the plastid. It localises to the chloroplast. This is Large ribosomal subunit protein uL2c (rpl2) from Chaetosphaeridium globosum (Charophycean green alga).